Here is a 379-residue protein sequence, read N- to C-terminus: UDP-N-acetylglucosamine--N-acetylmuramyl-(pentapeptide) pyrophosphoryl-undecaprenol N-acetylglucosamine transferase (379 aa).

UDP-N-acetyl-alpha-D-glucosamine is bound by residues 17-19 (TGG), Asn128, Arg169, Ser197, and Gln298.

This sequence belongs to the glycosyltransferase 28 family. MurG subfamily.

Its subcellular location is the cell inner membrane. The catalysed reaction is di-trans,octa-cis-undecaprenyl diphospho-N-acetyl-alpha-D-muramoyl-L-alanyl-D-glutamyl-meso-2,6-diaminopimeloyl-D-alanyl-D-alanine + UDP-N-acetyl-alpha-D-glucosamine = di-trans,octa-cis-undecaprenyl diphospho-[N-acetyl-alpha-D-glucosaminyl-(1-&gt;4)]-N-acetyl-alpha-D-muramoyl-L-alanyl-D-glutamyl-meso-2,6-diaminopimeloyl-D-alanyl-D-alanine + UDP + H(+). Its pathway is cell wall biogenesis; peptidoglycan biosynthesis. Cell wall formation. Catalyzes the transfer of a GlcNAc subunit on undecaprenyl-pyrophosphoryl-MurNAc-pentapeptide (lipid intermediate I) to form undecaprenyl-pyrophosphoryl-MurNAc-(pentapeptide)GlcNAc (lipid intermediate II). This is UDP-N-acetylglucosamine--N-acetylmuramyl-(pentapeptide) pyrophosphoryl-undecaprenol N-acetylglucosamine transferase from Brucella suis (strain ATCC 23445 / NCTC 10510).